The chain runs to 237 residues: Lectin alpha chain (237 aa).

Mn(2+)-binding residues include E8 and D10. Residues D10, Y12, N14, and D19 each contribute to the Ca(2+) site. Y12 is an a carbohydrate binding site. Positions 19, 24, and 34 each coordinate Mn(2+). 99–100 (LY) is an a carbohydrate binding site. Position 208 (D208) interacts with Ca(2+). Position 228 (R228) interacts with a carbohydrate.

The protein belongs to the leguminous lectin family. Homotetramer. The beta and gamma chains are produced by partial proteolytic processing of the lectin alpha chain by an asparaginyl endopeptidase. Mixture of 60% alpha lectin and 40% of its beta and gamma proteolytic fragments.

In terms of biological role, D-mannose/D-glucose-binding lectin. Has anti-inflammatory activity in rats. Induces histamine release in mast cells from rat. Induces lymphocyte proliferation and IFNG production. Shows toxicity against the aquatic snail B.glabrata at concentrations higher than 50 ug/ml. In Dioclea grandiflora (Mucana), this protein is Lectin alpha chain.